Consider the following 142-residue polypeptide: Transcriptional regulator MraZ (142 aa).

2 consecutive SpoVT-AbrB domains span residues 5 to 47 (RFTH…PMDS) and 76 to 119 (ATVV…SPEN).

This sequence belongs to the MraZ family. In terms of assembly, forms oligomers.

It is found in the cytoplasm. It localises to the nucleoid. The sequence is that of Transcriptional regulator MraZ from Thermomicrobium roseum (strain ATCC 27502 / DSM 5159 / P-2).